A 1100-amino-acid polypeptide reads, in one-letter code: Isoleucine--tRNA ligase (1100 aa).

The 'HIGH' region signature appears at 48–58 (PFATGLPHFGH). A 'KMSKS' region motif is present at residues 626–630 (KMSKS). ATP is bound at residue Lys629.

This sequence belongs to the class-I aminoacyl-tRNA synthetase family. IleS type 2 subfamily. As to quaternary structure, monomer. Zn(2+) is required as a cofactor.

The protein localises to the cytoplasm. It catalyses the reaction tRNA(Ile) + L-isoleucine + ATP = L-isoleucyl-tRNA(Ile) + AMP + diphosphate. Its function is as follows. Catalyzes the attachment of isoleucine to tRNA(Ile). As IleRS can inadvertently accommodate and process structurally similar amino acids such as valine, to avoid such errors it has two additional distinct tRNA(Ile)-dependent editing activities. One activity is designated as 'pretransfer' editing and involves the hydrolysis of activated Val-AMP. The other activity is designated 'posttransfer' editing and involves deacylation of mischarged Val-tRNA(Ile). This chain is Isoleucine--tRNA ligase, found in Treponema denticola (strain ATCC 35405 / DSM 14222 / CIP 103919 / JCM 8153 / KCTC 15104).